The sequence spans 2609 residues: Beige protein homolog 1 (2609 aa).

2 disordered regions span residues Asp-1654–Ser-1679 and Ile-1691–Thr-1729. Acidic residues predominate over residues Met-1711–Lys-1723. The region spanning Glu-1735–Val-1870 is the BEACH-type PH domain. Residues Ala-1907–Arg-2202 form the BEACH domain. 5 WD repeats span residues Lys-2249–Met-2290, Leu-2294–Ala-2332, Gly-2340–Ser-2379, Asn-2429–Leu-2475, and Ala-2507–His-2546. The FYVE-type zinc-finger motif lies at Asp-2550 to Pro-2604.

It is found in the cytoplasm. The protein resides in the membrane. Functionally, may be involved in protein sorting and cell wall formation. The chain is Beige protein homolog 1 (lvs1) from Schizosaccharomyces pombe (strain 972 / ATCC 24843) (Fission yeast).